Here is a 119-residue protein sequence, read N- to C-terminus: Large ribosomal subunit protein P3z (119 aa).

The segment covering 79-90 (AGGAASSGGGAG) has biased composition (gly residues). The segment at 79–119 (AGGAASSGGGAGEAAAAPKEDEKKKEESEEEEGDFGFDLFG) is disordered. The span at 96–105 (PKEDEKKKEE) shows a compositional bias: basic and acidic residues.

This sequence belongs to the eukaryotic ribosomal protein P1/P2 family. Phosphorylated.

Plays an important role in the elongation step of protein synthesis. In Arabidopsis thaliana (Mouse-ear cress), this protein is Large ribosomal subunit protein P3z (RPP3A).